The primary structure comprises 286 residues: Puff II/9-1 protein (286 aa).

A signal peptide spans 1–19 (MKQFIVLTVVLLAIQELQG). The segment at 61 to 235 (ITAIKKDNDF…ENALNTLRCE (175 aa)) is helical. Asn156 is a glycosylation site (N-linked (GlcNAc...) asparagine).

This Bradysia coprophila (Dark-winged fungus gnat) protein is Puff II/9-1 protein (II/9-1).